We begin with the raw amino-acid sequence, 965 residues long: Phosphatidylethanolamine N-methyltransferase (965 aa).

The disordered stretch occupies residues 1 to 55 (MSSSAADPFAARLNSDVRQRHPTASATSKNVEGTSQQKQQQQQQQSEANAAASRV). Over 1–91 (MSSSAADPFA…DPREPKNLSD (91 aa)) the chain is Lumenal. Residues 22–35 (PTASATSKNVEGTS) show a composition bias toward polar residues. Residues 36-45 (QQKQQQQQQQ) show a composition bias toward low complexity. The chain crosses the membrane as a helical span at residues 92–112 (VAVLAIIALHFLAAYYLPWGV). At 113–115 (KRP) the chain is on the cytoplasmic side. A helical transmembrane segment spans residues 116-136 (LFAAIFMFWRLAYNVGIGYLL). The Lumenal segment spans residues 137 to 201 (TIQSKYKLLV…EYNTWLTFRR (65 aa)). Residues 202–222 (VVDLILMCDFISYCLFAIVCA) traverse the membrane as a helical segment. Topologically, residues 223–229 (HKPDGEG) are cytoplasmic. A helical transmembrane segment spans residues 230–250 (LFMCFARWAAGITLVGFNLWV). Residues 251–279 (KLDAHRVVKDYAWYWGDFFYLIEQELTFD) lie on the Lumenal side of the membrane. A helical transmembrane segment spans residues 280–300 (GVFELAPHPMYSIGYAGYYGI). The Cytoplasmic portion of the chain corresponds to 301–306 (SMMAAS). The chain crosses the membrane as a helical span at residues 307–327 (YDVLFISIIAHAAQFAFLVIV). The Lumenal segment spans residues 328-389 (ENPHIEKTYN…IGLKNLDFFR (62 aa)). Residues 390 to 410 (ITDVAIVLLCAYLAVVTMVTP) traverse the membrane as a helical segment. Topologically, residues 411–417 (NTRFYQA) are cytoplasmic. Residues 418 to 438 (LFVLHALAWRLWYSAGLGVIL) form a helical membrane-spanning segment. Residues 439–467 (TMQSEEKMFTRHFLKYGESVGEAWRQWKG) are Lumenal-facing. Residues 468–488 (IYHLSNCLCHASFIAASYKMY) traverse the membrane as a helical segment. Over 489–496 (EFPADWTY) the chain is Cytoplasmic. The helical transmembrane segment at 497–517 (GWALLKHVVGLSLIALQVWTA) threads the bilayer. Topologically, residues 518–573 (TSIYESLGEFGWFYGDFFFDSKRQLTYTSIYRFLNNPERVFGTAGLWGAALITWSR) are lumenal. A helical membrane pass occupies residues 574–594 (AIFLMALAGHFLTLAFLAYVE). Over 595 to 965 (KPHMQKVYGR…TTPVDSKFSE (371 aa)) the chain is Cytoplasmic.

This sequence belongs to the class VI-like SAM-binding methyltransferase superfamily. CHO2 family.

It localises to the endoplasmic reticulum membrane. The catalysed reaction is a 1,2-diacyl-sn-glycero-3-phosphoethanolamine + S-adenosyl-L-methionine = a 1,2-diacyl-sn-glycero-3-phospho-N-methylethanolamine + S-adenosyl-L-homocysteine + H(+). The protein operates within phospholipid metabolism; phosphatidylcholine biosynthesis. Functionally, catalyzes the first step of the methylation pathway of phosphatidylcholine biosynthesis, the SAM-dependent methylation of phosphatidylethanolamine (PE) to phosphatidylmonomethylethanolamine (PMME). This chain is Phosphatidylethanolamine N-methyltransferase, found in Neurospora crassa (strain ATCC 24698 / 74-OR23-1A / CBS 708.71 / DSM 1257 / FGSC 987).